The primary structure comprises 215 residues: MSKVYDWFEERLEIQAIADDITSKYVPPHVNIFHCLGGITLTCFLVQVATGFAMTFYYRPTVTEAFASVQYIMTEANFGWLIRSVHRWSASMMVLMMILHVFRVYLTGGFKKPRELTWVTGVVLAVLTASFGVTGYSLPWDQIGYWAVKIVTGVPEAIPVIGSPLVELLRGSASVGQSTLTRFYSLHTFVLPLLTAVFMLMHFPMIRKQGISGPL.

A helical transmembrane segment spans residues 32–52; it reads IFHCLGGITLTCFLVQVATGF. C35 contributes to the heme c binding site. The heme b site is built by H86 and H100. 3 helical membrane passes run 90–110, 116–136, and 186–206; these read ASMMVLMMILHVFRVYLTGGF, LTWVTGVVLAVLTASFGVTGY, and LHTFVLPLLTAVFMLMHFPMI. Heme b is bound by residues H187 and H202.

Belongs to the cytochrome b family. PetB subfamily. In terms of assembly, the 4 large subunits of the cytochrome b6-f complex are cytochrome b6, subunit IV (17 kDa polypeptide, PetD), cytochrome f and the Rieske protein, while the 4 small subunits are PetG, PetL, PetM and PetN. The complex functions as a dimer. Heme b serves as cofactor. Heme c is required as a cofactor.

The protein resides in the plastid. The protein localises to the chloroplast thylakoid membrane. Component of the cytochrome b6-f complex, which mediates electron transfer between photosystem II (PSII) and photosystem I (PSI), cyclic electron flow around PSI, and state transitions. This is Cytochrome b6 from Calycanthus floridus var. glaucus (Eastern sweetshrub).